The chain runs to 506 residues: Protein nucleotidyltransferase YdiU (506 aa).

Residues glycine 95, glycine 97, arginine 98, lysine 118, aspartate 130, glycine 131, arginine 181, and arginine 188 each coordinate ATP. Aspartate 257 (proton acceptor) is an active-site residue. Mg(2+) is bound by residues asparagine 258 and aspartate 267. Aspartate 267 provides a ligand contact to ATP. Residues 487–506 (KHYQDAPTPDQRVKQTFCGT) form a disordered region.

This sequence belongs to the SELO family. The cofactor is Mg(2+). Mn(2+) is required as a cofactor.

The enzyme catalyses L-seryl-[protein] + ATP = 3-O-(5'-adenylyl)-L-seryl-[protein] + diphosphate. It carries out the reaction L-threonyl-[protein] + ATP = 3-O-(5'-adenylyl)-L-threonyl-[protein] + diphosphate. The catalysed reaction is L-tyrosyl-[protein] + ATP = O-(5'-adenylyl)-L-tyrosyl-[protein] + diphosphate. It catalyses the reaction L-histidyl-[protein] + UTP = N(tele)-(5'-uridylyl)-L-histidyl-[protein] + diphosphate. The enzyme catalyses L-seryl-[protein] + UTP = O-(5'-uridylyl)-L-seryl-[protein] + diphosphate. It carries out the reaction L-tyrosyl-[protein] + UTP = O-(5'-uridylyl)-L-tyrosyl-[protein] + diphosphate. Its function is as follows. Nucleotidyltransferase involved in the post-translational modification of proteins. It can catalyze the addition of adenosine monophosphate (AMP) or uridine monophosphate (UMP) to a protein, resulting in modifications known as AMPylation and UMPylation. This Shewanella denitrificans (strain OS217 / ATCC BAA-1090 / DSM 15013) protein is Protein nucleotidyltransferase YdiU.